The following is a 43-amino-acid chain: Lanthionine-containing peptide SapB (43 aa).

The N-terminal stretch at 1–21 is a signal peptide; the sequence is MALLDLQAMDTPAEDSFGELA. 2 cross-links (lanthionine (Ser-Cys)) span residues 24-31 and 34-41; these read SQVSLLVC and SSLSVVLC. A 2,3-didehydroalanine (Ser) mark is found at S27 and S37.

It belongs to the lanthionine-containing morphogen protein family. Post-translationally, maturation involves the enzymatic conversion of Ser into dehydrated AA and the formation of thioether bonds with cysteine. This is followed by membrane translocation and cleavage of the modified precursor.

Functionally, lanthionine-containing peptide devoid of antibiotic properties, involved in the formation of aerial mycelium. Suggested to self-assemble at air-water interfaces, thus providing a film of surfactant through which nascent aerial hyphae can emerge. The aerial hyphae differentiate further into spores. The sequence is that of Lanthionine-containing peptide SapB (ramS) from Streptomyces griseus subsp. griseus (strain JCM 4626 / CBS 651.72 / NBRC 13350 / KCC S-0626 / ISP 5235).